The chain runs to 159 residues: Putative esterase DR_2406 (159 aa).

Belongs to the thioesterase PaaI family.

This chain is Putative esterase DR_2406, found in Deinococcus radiodurans (strain ATCC 13939 / DSM 20539 / JCM 16871 / CCUG 27074 / LMG 4051 / NBRC 15346 / NCIMB 9279 / VKM B-1422 / R1).